The chain runs to 249 residues: 3-deoxy-D-manno-octulosonic acid kinase (249 aa).

The active site involves aspartate 175.

The protein belongs to the protein kinase superfamily. KdkA/RfaP family.

The protein resides in the cell inner membrane. The enzyme catalyses an alpha-Kdo-(2-&gt;6)-lipid IVA + ATP = a 4-O-phospho-alpha-Kdo-(2-&gt;6)-lipid IVA + ADP + H(+). The protein operates within bacterial outer membrane biogenesis; LPS core biosynthesis. Functionally, catalyzes the ATP-dependent phosphorylation of the 3-deoxy-D-manno-octulosonic acid (Kdo) residue in Kdo-lipid IV(A) at the 4-OH position. This Xylella fastidiosa (strain M12) protein is 3-deoxy-D-manno-octulosonic acid kinase.